The chain runs to 637 residues: tRNA uridine 5-carboxymethylaminomethyl modification enzyme MnmG (637 aa).

An FAD-binding site is contributed by 14-19 (GAGHAG). Residue 279–293 (GPRYCPSIEDKVVRF) coordinates NAD(+).

Belongs to the MnmG family. In terms of assembly, homodimer. Heterotetramer of two MnmE and two MnmG subunits. It depends on FAD as a cofactor.

It is found in the cytoplasm. Functionally, NAD-binding protein involved in the addition of a carboxymethylaminomethyl (cmnm) group at the wobble position (U34) of certain tRNAs, forming tRNA-cmnm(5)s(2)U34. This Desulfitobacterium hafniense (strain DSM 10664 / DCB-2) protein is tRNA uridine 5-carboxymethylaminomethyl modification enzyme MnmG.